The primary structure comprises 722 residues: BTB/POZ domain-containing protein 9 (722 aa).

The BTB domain occupies 46–112 (ADVEFIVEEE…IYSGTLLLST (67 aa)). The BACK domain occupies 151–247 (CMILDAARLY…MNLEHLLQVV (97 aa)). Residues 565 to 593 (QDKNYLKKIADMEKEREKREKEKKTAKTD) are a coiled coil. Residues 577–594 (EKEREKREKEKKTAKTDD) are compositionally biased toward basic and acidic residues. Disordered regions lie at residues 577 to 626 (EKER…VLRS) and 640 to 722 (PLTP…RETL). Residues 597–606 (IASTSGSSLA) show a composition bias toward polar residues. The span at 607–626 (SGHAESPSTSSSSSQSVLRS) shows a compositional bias: low complexity. Residues 641-658 (LTPPALSPPGTPALPAPL) are compositionally biased toward pro residues. The span at 670–679 (EQNQPSNISA) shows a compositional bias: polar residues. Residues 686-704 (SPSSRSNPSPSLSRSRSQS) are compositionally biased toward low complexity.

As to expression, detected in the brain (at protein level).

The protein localises to the cytoplasm. Essential for the homeostatic regulation of sleep and motor activity, by depressing hyperactivity and wakefulness. May function, at least in part, by ensuring dopamine biosynthesis. This is BTB/POZ domain-containing protein 9 from Drosophila melanogaster (Fruit fly).